The sequence spans 211 residues: N-(5'-phosphoribosyl)anthranilate isomerase (211 aa).

This sequence belongs to the TrpF family.

The enzyme catalyses N-(5-phospho-beta-D-ribosyl)anthranilate = 1-(2-carboxyphenylamino)-1-deoxy-D-ribulose 5-phosphate. It participates in amino-acid biosynthesis; L-tryptophan biosynthesis; L-tryptophan from chorismate: step 3/5. The chain is N-(5'-phosphoribosyl)anthranilate isomerase from Methanococcus maripaludis (strain DSM 14266 / JCM 13030 / NBRC 101832 / S2 / LL).